Consider the following 140-residue polypeptide: Small ribosomal subunit protein uS19 (140 aa).

Belongs to the universal ribosomal protein uS19 family.

Its function is as follows. Protein S19 forms a complex with S13 that binds strongly to the 16S ribosomal RNA. This chain is Small ribosomal subunit protein uS19 (rps19), found in Saccharolobus solfataricus (strain ATCC 35092 / DSM 1617 / JCM 11322 / P2) (Sulfolobus solfataricus).